The primary structure comprises 225 residues: Histone-arginine methyltransferase METTL23 (225 aa).

It belongs to the methyltransferase superfamily. METTL23 family. As to quaternary structure, interacts with HSPA5, HSP90B1, TUBULIN, UGGT1 and UGGT2. Interacts with TET3. Interacts with STPG4.

It is found in the nucleus. It localises to the cytoplasm. The catalysed reaction is L-arginyl-[protein] + 2 S-adenosyl-L-methionine = N(omega),N(omega)-dimethyl-L-arginyl-[protein] + 2 S-adenosyl-L-homocysteine + 2 H(+). Its function is as follows. Histone methyltransferase that dimethylates histone H3 at 'Arg-17', forming asymmetric dimethylarginine (H3R17me2a), leading to activate transcription via chromatin remodeling. Maternal factor involved in epigenetic chromatin reprogramming of the paternal genome in the zygote: mediates H3R17me2a, promoting histone H3.3 incorporation in the male pronucleus, leading to TET3 recruitment and subsequent DNA demethylation. The polypeptide is Histone-arginine methyltransferase METTL23 (Rattus norvegicus (Rat)).